Consider the following 128-residue polypeptide: uncharacterized protein (128 aa).

This is an uncharacterized protein from Haemophilus influenzae (strain ATCC 51907 / DSM 11121 / KW20 / Rd).